A 1033-amino-acid polypeptide reads, in one-letter code: Putative U-box domain-containing protein 42 (1033 aa).

The segment at 145 to 226 (SQSQMTDIPD…SSNASSQRKY (82 aa)) is disordered. Residues 200–226 (LSKSQSQSTEIPDIPSQSSNASSQRKY) show a composition bias toward polar residues. Positions 245–322 (PPYQAFICPL…QEWKVRNEAA (78 aa)) constitute a U-box domain. ARM repeat units lie at residues 483 to 522 (PENIKQMAESGLLEPLLGHLAEGSEETQVAMAAYLVEIDI), 523 to 562 (GHEKKTYVAEKACPALIGLVQSENIDARRAAFKALAHISL), 564 to 608 (HPNN…NILE), 610 to 659 (GLEH…SLSK), and 665 to 704 (ATIVSVIKETDASFAMIELINNPHDELGVGALKLLIALTP).

The catalysed reaction is S-ubiquitinyl-[E2 ubiquitin-conjugating enzyme]-L-cysteine + [acceptor protein]-L-lysine = [E2 ubiquitin-conjugating enzyme]-L-cysteine + N(6)-ubiquitinyl-[acceptor protein]-L-lysine.. It participates in protein modification; protein ubiquitination. Its function is as follows. Functions as an E3 ubiquitin ligase. The protein is Putative U-box domain-containing protein 42 (PUB42) of Arabidopsis thaliana (Mouse-ear cress).